A 301-amino-acid polypeptide reads, in one-letter code: UDP-N-acetylenolpyruvoylglucosamine reductase (301 aa).

Residues 30–194 form the FAD-binding PCMH-type domain; the sequence is VGGEADYLVF…LSVKFALAPG (165 aa). R173 is an active-site residue. The Proton donor role is filled by S223. The active site involves E293.

This sequence belongs to the MurB family. Requires FAD as cofactor.

Its subcellular location is the cytoplasm. It carries out the reaction UDP-N-acetyl-alpha-D-muramate + NADP(+) = UDP-N-acetyl-3-O-(1-carboxyvinyl)-alpha-D-glucosamine + NADPH + H(+). Its pathway is cell wall biogenesis; peptidoglycan biosynthesis. Cell wall formation. The protein is UDP-N-acetylenolpyruvoylglucosamine reductase of Streptococcus pneumoniae (strain Hungary19A-6).